The chain runs to 257 residues: Diacetyl reductase [(S)-acetoin forming] (257 aa).

Position 6–30 (6–30 (IITGSAGGLGKGIAERLANDGFNIV)) interacts with NAD(+). Ser-139 is a substrate binding site. The active-site Proton acceptor is Tyr-152. Lys-156 is an active-site residue.

It belongs to the short-chain dehydrogenases/reductases (SDR) family.

The catalysed reaction is (S)-acetoin + NAD(+) = diacetyl + NADH + H(+). Catalyzes the irreversible reduction of 2,3-butanediol to (S)-acetoin in the presence of NADH. This is Diacetyl reductase [(S)-acetoin forming] (butA) from Staphylococcus epidermidis (strain ATCC 35984 / DSM 28319 / BCRC 17069 / CCUG 31568 / BM 3577 / RP62A).